The chain runs to 229 residues: Transcriptional regulatory protein YxdJ (229 aa).

Residues lysine 3 to isoleucine 116 form the Response regulatory domain. At aspartate 52 the chain carries 4-aspartylphosphate. Residues glutamate 129–alanine 227 constitute a DNA-binding region (ompR/PhoB-type).

Phosphorylated by YxdK.

It localises to the cytoplasm. Functionally, probable member of the two-component regulatory system YxdK/YxdJ. Positively regulates the expression of the yxdLMyxeA operon by direct interaction with its promoter region. Could also indirectly regulate the expression of the dlt operon. In Bacillus subtilis (strain 168), this protein is Transcriptional regulatory protein YxdJ (yxdJ).